The following is a 414-amino-acid chain: Serine hydroxymethyltransferase (414 aa).

Residues L121 and 125–127 contribute to the (6S)-5,6,7,8-tetrahydrofolate site; that span reads GHL. Position 229 is an N6-(pyridoxal phosphate)lysine (K229).

Belongs to the SHMT family. As to quaternary structure, homodimer. It depends on pyridoxal 5'-phosphate as a cofactor.

It localises to the cytoplasm. It catalyses the reaction (6R)-5,10-methylene-5,6,7,8-tetrahydrofolate + glycine + H2O = (6S)-5,6,7,8-tetrahydrofolate + L-serine. Its pathway is one-carbon metabolism; tetrahydrofolate interconversion. The protein operates within amino-acid biosynthesis; glycine biosynthesis; glycine from L-serine: step 1/1. In terms of biological role, catalyzes the reversible interconversion of serine and glycine with tetrahydrofolate (THF) serving as the one-carbon carrier. This reaction serves as the major source of one-carbon groups required for the biosynthesis of purines, thymidylate, methionine, and other important biomolecules. Also exhibits THF-independent aldolase activity toward beta-hydroxyamino acids, producing glycine and aldehydes, via a retro-aldol mechanism. This chain is Serine hydroxymethyltransferase, found in Polaromonas sp. (strain JS666 / ATCC BAA-500).